Reading from the N-terminus, the 342-residue chain is Holliday junction branch migration complex subunit RuvB (342 aa).

Residues 1 to 179 form a large ATPase domain (RuvB-L) region; the sequence is MTNILSPEKI…FGIPMRLNFY (179 aa). ATP-binding positions include Ile-18, Arg-19, Gly-60, Lys-63, Thr-64, Thr-65, 126–128, Arg-169, Tyr-179, and Arg-216; that span reads EDF. A Mg(2+)-binding site is contributed by Thr-64. Positions 180 to 250 are small ATPAse domain (RuvB-S); that stretch reads NTEELKKVLN…ISDFGLNRLE (71 aa). The head domain (RuvB-H) stretch occupies residues 253-342; it reads HIGLDSNDYR…HQFNIFNENE (90 aa). Positions 289, 308, and 313 each coordinate DNA.

It belongs to the RuvB family. As to quaternary structure, homohexamer. Forms an RuvA(8)-RuvB(12)-Holliday junction (HJ) complex. HJ DNA is sandwiched between 2 RuvA tetramers; dsDNA enters through RuvA and exits via RuvB. An RuvB hexamer assembles on each DNA strand where it exits the tetramer. Each RuvB hexamer is contacted by two RuvA subunits (via domain III) on 2 adjacent RuvB subunits; this complex drives branch migration. In the full resolvosome a probable DNA-RuvA(4)-RuvB(12)-RuvC(2) complex forms which resolves the HJ.

It localises to the cytoplasm. It carries out the reaction ATP + H2O = ADP + phosphate + H(+). Its function is as follows. The RuvA-RuvB-RuvC complex processes Holliday junction (HJ) DNA during genetic recombination and DNA repair, while the RuvA-RuvB complex plays an important role in the rescue of blocked DNA replication forks via replication fork reversal (RFR). RuvA specifically binds to HJ cruciform DNA, conferring on it an open structure. The RuvB hexamer acts as an ATP-dependent pump, pulling dsDNA into and through the RuvAB complex. RuvB forms 2 homohexamers on either side of HJ DNA bound by 1 or 2 RuvA tetramers; 4 subunits per hexamer contact DNA at a time. Coordinated motions by a converter formed by DNA-disengaged RuvB subunits stimulates ATP hydrolysis and nucleotide exchange. Immobilization of the converter enables RuvB to convert the ATP-contained energy into a lever motion, pulling 2 nucleotides of DNA out of the RuvA tetramer per ATP hydrolyzed, thus driving DNA branch migration. The RuvB motors rotate together with the DNA substrate, which together with the progressing nucleotide cycle form the mechanistic basis for DNA recombination by continuous HJ branch migration. Branch migration allows RuvC to scan DNA until it finds its consensus sequence, where it cleaves and resolves cruciform DNA. The sequence is that of Holliday junction branch migration complex subunit RuvB from Rickettsia felis (strain ATCC VR-1525 / URRWXCal2) (Rickettsia azadi).